Reading from the N-terminus, the 542-residue chain is Beta-fructofuranosidase, insoluble isoenzyme 5 (542 aa).

Substrate contacts are provided by residues 50 to 53, Gln-69, Trp-77, and 114 to 115; these read WQND and WS. Residue Asp-53 is part of the active site. Asn-142 is a glycosylation site (N-linked (GlcNAc...) asparagine). Substrate contacts are provided by residues 178–179 and Glu-233; that span reads RD. An intrachain disulfide couples Cys-389 to Cys-436. N-linked (GlcNAc...) asparagine glycosylation is found at Asn-510 and Asn-516.

It belongs to the glycosyl hydrolase 32 family. In terms of tissue distribution, expressed in roots and leaves.

It localises to the secreted. It is found in the extracellular space. The protein localises to the apoplast. The protein resides in the cell wall. It catalyses the reaction Hydrolysis of terminal non-reducing beta-D-fructofuranoside residues in beta-D-fructofuranosides.. Its function is as follows. May play a role in stress response. This chain is Beta-fructofuranosidase, insoluble isoenzyme 5 (CIN5), found in Oryza sativa subsp. japonica (Rice).